Reading from the N-terminus, the 505-residue chain is Beta-agarase (505 aa).

Positions 1–23 (MLKVIPWLLVTSSLVAIPTYIHA) are cleaved as a signal peptide. The Proton donor role is filled by E200. E322 (nucleophile) is an active-site residue.

It belongs to the glycosyl hydrolase 86 family.

The protein localises to the secreted. The enzyme catalyses Hydrolysis of (1-&gt;4)-beta-D-galactosidic linkages in agarose, giving the tetramer as the predominant product.. Functionally, hydrolase that cleaves agar at the (1-&gt;4) linkage, producing tetrameric saccharide molecules. Is specific for agar and agarose and does not digest alginate or carrageenan. In Pseudoalteromonas atlantica (Alteromonas atlantica), this protein is Beta-agarase.